A 137-amino-acid chain; its full sequence is Large ribosomal subunit protein uL14 (137 aa).

This sequence belongs to the universal ribosomal protein uL14 family. In terms of assembly, component of the large ribosomal subunit. Mature ribosomes consist of a small (40S) and a large (60S) subunit. The 40S subunit contains about 32 different proteins and 1 molecule of RNA (18S). The 60S subunit contains 45 different proteins and 3 molecules of RNA (25S, 5.8S and 5S).

It localises to the cytoplasm. Component of the ribosome, a large ribonucleoprotein complex responsible for the synthesis of proteins in the cell. The small ribosomal subunit (SSU) binds messenger RNAs (mRNAs) and translates the encoded message by selecting cognate aminoacyl-transfer RNA (tRNA) molecules. The large subunit (LSU) contains the ribosomal catalytic site termed the peptidyl transferase center (PTC), which catalyzes the formation of peptide bonds, thereby polymerizing the amino acids delivered by tRNAs into a polypeptide chain. The nascent polypeptides leave the ribosome through a tunnel in the LSU and interact with protein factors that function in enzymatic processing, targeting, and the membrane insertion of nascent chains at the exit of the ribosomal tunnel. This chain is Large ribosomal subunit protein uL14, found in Candida albicans (strain SC5314 / ATCC MYA-2876) (Yeast).